Consider the following 415-residue polypeptide: Serine hydroxymethyltransferase (415 aa).

(6S)-5,6,7,8-tetrahydrofolate contacts are provided by residues leucine 122 and 126-128; that span reads GHL. Lysine 230 is modified (N6-(pyridoxal phosphate)lysine).

Belongs to the SHMT family. In terms of assembly, homodimer. It depends on pyridoxal 5'-phosphate as a cofactor.

Its subcellular location is the cytoplasm. It catalyses the reaction (6R)-5,10-methylene-5,6,7,8-tetrahydrofolate + glycine + H2O = (6S)-5,6,7,8-tetrahydrofolate + L-serine. It participates in one-carbon metabolism; tetrahydrofolate interconversion. It functions in the pathway amino-acid biosynthesis; glycine biosynthesis; glycine from L-serine: step 1/1. Functionally, catalyzes the reversible interconversion of serine and glycine with tetrahydrofolate (THF) serving as the one-carbon carrier. This reaction serves as the major source of one-carbon groups required for the biosynthesis of purines, thymidylate, methionine, and other important biomolecules. Also exhibits THF-independent aldolase activity toward beta-hydroxyamino acids, producing glycine and aldehydes, via a retro-aldol mechanism. The chain is Serine hydroxymethyltransferase from Cupriavidus necator (strain ATCC 17699 / DSM 428 / KCTC 22496 / NCIMB 10442 / H16 / Stanier 337) (Ralstonia eutropha).